A 215-amino-acid polypeptide reads, in one-letter code: Probable phosphoglycerate mutase GpmB (215 aa).

Substrate is bound by residues 8–15 (RHGETQWN), 21–22 (QG), Arg-58, Arg-60, 82–85 (ELNM), 104–105 (RR), and 151–152 (GI). Catalysis depends on His-9, which acts as the Tele-phosphohistidine intermediate. Residue Glu-82 is the Proton donor/acceptor of the active site.

It belongs to the phosphoglycerate mutase family. GpmB subfamily.

It catalyses the reaction (2R)-2-phosphoglycerate = (2R)-3-phosphoglycerate. Its pathway is carbohydrate degradation; glycolysis; pyruvate from D-glyceraldehyde 3-phosphate: step 3/5. The chain is Probable phosphoglycerate mutase GpmB from Escherichia fergusonii (strain ATCC 35469 / DSM 13698 / CCUG 18766 / IAM 14443 / JCM 21226 / LMG 7866 / NBRC 102419 / NCTC 12128 / CDC 0568-73).